A 586-amino-acid polypeptide reads, in one-letter code: Arginine--tRNA ligase (586 aa).

The 'HIGH' region signature appears at 131–141 (ANPTGPLHVGH).

The protein belongs to the class-I aminoacyl-tRNA synthetase family. As to quaternary structure, monomer.

Its subcellular location is the cytoplasm. It carries out the reaction tRNA(Arg) + L-arginine + ATP = L-arginyl-tRNA(Arg) + AMP + diphosphate. The sequence is that of Arginine--tRNA ligase from Nitrosomonas eutropha (strain DSM 101675 / C91 / Nm57).